The primary structure comprises 260 residues: tRNA (guanine-N(7)-)-methyltransferase (260 aa).

A disordered region spans residues Met-1–His-37. 4 residues coordinate S-adenosyl-L-methionine: Glu-90, Glu-115, Asp-142, and Asp-165. Residue Asp-165 is part of the active site. Residues Lys-169, Asp-201, and Thr-236–Glu-239 contribute to the substrate site.

Belongs to the class I-like SAM-binding methyltransferase superfamily. TrmB family.

The enzyme catalyses guanosine(46) in tRNA + S-adenosyl-L-methionine = N(7)-methylguanosine(46) in tRNA + S-adenosyl-L-homocysteine. It participates in tRNA modification; N(7)-methylguanine-tRNA biosynthesis. Its function is as follows. Catalyzes the formation of N(7)-methylguanine at position 46 (m7G46) in tRNA. This is tRNA (guanine-N(7)-)-methyltransferase from Paraburkholderia xenovorans (strain LB400).